We begin with the raw amino-acid sequence, 631 residues long: Probable sulfate transporter 3.3 (631 aa).

Over 1–69 the chain is Cytoplasmic; the sequence is MEVHKVVAPP…EYSFSLLKSD (69 aa). The helical transmembrane segment at 70 to 90 threads the bilayer; sequence VVSGLTIASLAIPQGISYAKL. The Extracellular portion of the chain corresponds to 91–92; that stretch reads AN. The chain crosses the membrane as a helical span at residues 93 to 113; sequence LPPIVGLYSSFVPPLVYAVLG. Topologically, residues 114 to 117 are cytoplasmic; sequence SSRD. A helical membrane pass occupies residues 118-138; it reads LAVGPVSIASLILGSMLRQQV. Over 139 to 144 the chain is Extracellular; sequence SPVDDP. The helical transmembrane segment at 145–165 threads the bilayer; that stretch reads VLFLQLAFSSTFFAGLFQASL. Topologically, residues 166–171 are cytoplasmic; sequence GILRLG. A helical transmembrane segment spans residues 172 to 192; sequence FIIDFLSKATLIGFMGGAAII. Residues 193–223 are Extracellular-facing; sequence VSLQQLKGLLGITHFTKHMSVVPVLSSVFQH. A helical transmembrane segment spans residues 224-244; the sequence is TNEWSWQTIVMGVCFLLFLLS. Over 245 to 256 the chain is Cytoplasmic; the sequence is TRHLSMKKPKLF. A helical membrane pass occupies residues 257-277; sequence WVSAGAPLLSVIVSTLLVFVF. The Extracellular segment spans residues 278–309; the sequence is RAERHGISVIGKLPEGLNPPSWNMLQFHGSHL. Residues 310 to 330 traverse the membrane as a helical segment; it reads ALVAKTGLVTGIVSLTEGIAV. The Cytoplasmic portion of the chain corresponds to 331–347; it reads GRTFAALKNYHVDGNKE. Residues 348 to 368 traverse the membrane as a helical segment; the sequence is MIAIGLMNVVGSATSCYVTTG. Residues 369 to 384 lie on the Extracellular side of the membrane; that stretch reads AFSRSAVNNNAGAKTA. The helical transmembrane segment at 385-405 threads the bilayer; the sequence is VSNIVMSVTVMVTLLFLMPLF. Residues 406-410 are Cytoplasmic-facing; the sequence is EYTPN. A helical membrane pass occupies residues 411–431; the sequence is VVLGAIIVTAVIGLIDLPAAC. The Extracellular segment spans residues 432–441; the sequence is HIWKIDKFDF. A helical transmembrane segment spans residues 442 to 462; that stretch reads LVMLCAFFGVIFLSVQNGLAI. Residues 463 to 631 are Cytoplasmic-facing; that stretch reads AVGLSLFKIL…SLKGPSLSNV (169 aa). Positions 497 to 621 constitute an STAS domain; it reads HYKEAQRIPG…LTVAEAVASL (125 aa).

This sequence belongs to the SLC26A/SulP transporter (TC 2.A.53) family. As to expression, expressed only in leaves.

Its subcellular location is the membrane. In terms of biological role, h(+)/sulfate cotransporter that may play a role in the regulation of sulfate assimilation. The sequence is that of Probable sulfate transporter 3.3 (SULTR3;3) from Arabidopsis thaliana (Mouse-ear cress).